The following is a 331-amino-acid chain: MENPSPAAALGKALCALLLATLGAAGQPLGGESICSARALAKYSITFTGKWSQTAFPKQYPLFRPPAQWSSLLGAAHSSDYSMWRKNQYVSNGLRDFAERGEAWALMKEIEAAGEALQSVHAVFSAPAVPSGTGQTSAELEVQRRHSLVSFVVRIVPSPDWFVGVDSLDLCDGDRWREQAALDLYPYDAGTDSGFTFSSPNFATIPQDTVTEITSSSPSHPANSFYYPRLKALPPIARVTLVRLRQSPRAFIPPAPVLPSRDNEIVDSASVPETPLDCEVSLWSSWGLCGGHCGRLGTKSRTRYVRVQPANNGSPCPELEEEAECVPDNCV.

The first 26 residues, 1 to 26, serve as a signal peptide directing secretion; sequence MENPSPAAALGKALCALLLATLGAAG. The 191-residue stretch at 31–221 folds into the Spondin domain; it reads GESICSARAL…EITSSSPSHP (191 aa). Cysteines 35 and 171 form a disulfide. Glutamate 141 lines the a divalent metal cation pocket. 3 residues coordinate Ca(2+): aspartate 160, aspartate 188, and aspartate 192. Residues 277–331 enclose the TSP type-1 domain; it reads DCEVSLWSSWGLCGGHCGRLGTKSRTRYVRVQPANNGSPCPELEEEAECVPDNCV. Tryptophan 283 is a glycosylation site (C-linked (Man) tryptophan).

As to quaternary structure, monomer. Interacts with integrin. In terms of tissue distribution, expressed in normal lung tissue but not in lung carcinoma cell lines.

The protein resides in the secreted. It is found in the extracellular space. The protein localises to the extracellular matrix. Its function is as follows. Cell adhesion protein that promotes adhesion and outgrowth of hippocampal embryonic neurons. Binds directly to bacteria and their components and functions as an opsonin for macrophage phagocytosis of bacteria. Essential in the initiation of the innate immune response and represents a unique pattern-recognition molecule in the ECM for microbial pathogens. Binds bacterial lipopolysaccharide (LPS). This is Spondin-2 (SPON2) from Homo sapiens (Human).